Consider the following 673-residue polypeptide: Elongation factor G 1 (673 aa).

The region spanning 3–277 (KELRNIGIIA…SIVDYLPSPL (275 aa)) is the tr-type G domain. GTP-binding positions include 12-19 (AHIDAGKT), 76-80 (DTPGH), and 130-133 (NKMD).

Belongs to the TRAFAC class translation factor GTPase superfamily. Classic translation factor GTPase family. EF-G/EF-2 subfamily.

It is found in the cytoplasm. In terms of biological role, catalyzes the GTP-dependent ribosomal translocation step during translation elongation. During this step, the ribosome changes from the pre-translocational (PRE) to the post-translocational (POST) state as the newly formed A-site-bound peptidyl-tRNA and P-site-bound deacylated tRNA move to the P and E sites, respectively. Catalyzes the coordinated movement of the two tRNA molecules, the mRNA and conformational changes in the ribosome. This chain is Elongation factor G 1, found in Syntrophomonas wolfei subsp. wolfei (strain DSM 2245B / Goettingen).